Consider the following 111-residue polypeptide: Transcription factor S (111 aa).

C4, C7, C24, C27, C72, C75, C100, and C103 together coordinate Zn(2+). The C4-type zinc-finger motif lies at 4 to 27 (CPKCGSMMMPRKENGKTVYKCSKC). A TFIIS-type zinc finger spans residues 68-108 (RGISCPSCGNDEAYFWILQTRSADEPATRFYKCTKCGKVWR).

Belongs to the archaeal RpoM/eukaryotic RPA12/RPB9/RPC11 RNA polymerase family.

Its function is as follows. Induces RNA cleavage activity in the RNA polymerase. In its presence, the cleavage activity of the RNA polymerase truncates the RNA back to position +15 in a stepwise manner by releasing mainly dinucleotides from the 3'-end of the nascent RNA. The truncated RNAs are able to continue elongation. Involved in transcriptional proofreading and fidelity. Misincorporation of nucleotides during elongation of transcription leads to arrested elongation complexes which are rescued by TFS-promoted removal of a dinucleotide from the 3'-end. TFS is able to induce a cleavage resynthesis cycle in stalled elongation complexes (resulting from the next missing nucleotide or a reduced incorporation rate of a wrong nucleotide) preventing misincorporation and enabling proofreading in a post-incorporation manner. Pausing of elongation complexes is the main determinant of TFS-induced RNA cleavage. This is Transcription factor S from Sulfolobus acidocaldarius (strain ATCC 33909 / DSM 639 / JCM 8929 / NBRC 15157 / NCIMB 11770).